A 130-amino-acid polypeptide reads, in one-letter code: Fluoride-specific ion channel FluC (130 aa).

4 helical membrane-spanning segments follow: residues 9–29 (LAIILGAIPGALARYYATIFL), 39–59 (YATFLINFSGCVGMGLVVTLA), 71–91 (LLLAVGFLGSYTTFSTYALEV), and 104–124 (VLYGLGSLGIGTIGVLLGSLI). Na(+) contacts are provided by glycine 79 and threonine 82.

The protein belongs to the fluoride channel Fluc/FEX (TC 1.A.43) family.

Its subcellular location is the cell inner membrane. It catalyses the reaction fluoride(in) = fluoride(out). Its activity is regulated as follows. Na(+) is not transported, but it plays an essential structural role and its presence is essential for fluoride channel function. Functionally, fluoride-specific ion channel. Important for reducing fluoride concentration in the cell, thus reducing its toxicity. The sequence is that of Fluoride-specific ion channel FluC from Synechocystis sp. (strain ATCC 27184 / PCC 6803 / Kazusa).